The sequence spans 226 residues: ATP synthase F(0) complex subunit a (226 aa).

The next 6 membrane-spanning stretches (helical) occupy residues 6–26, 68–88, 97–117, 138–158, 164–184, and 189–209; these read FASFITPMMFGLPLVTLIVLF, WALMLMSLILFIGSTNLLGLL, QLSMNLGMAIPLWGGAVITGF, IPMLVIIETISLFIQPVALAV, ITAGHLLIHLIGGATLALMSI, and ALITFIILILLTVLEFAVAMI.

This sequence belongs to the ATPase A chain family. Component of the ATP synthase complex composed at least of ATP5F1A/subunit alpha, ATP5F1B/subunit beta, ATP5MC1/subunit c (homooctomer), MT-ATP6/subunit a, MT-ATP8/subunit 8, ATP5ME/subunit e, ATP5MF/subunit f, ATP5MG/subunit g, ATP5MK/subunit k, ATP5MJ/subunit j, ATP5F1C/subunit gamma, ATP5F1D/subunit delta, ATP5F1E/subunit epsilon, ATP5PF/subunit F6, ATP5PB/subunit b, ATP5PD/subunit d, ATP5PO/subunit OSCP. ATP synthase complex consists of a soluble F(1) head domain (subunits alpha(3) and beta(3)) - the catalytic core - and a membrane F(0) domain - the membrane proton channel (subunits c, a, 8, e, f, g, k and j). These two domains are linked by a central stalk (subunits gamma, delta, and epsilon) rotating inside the F1 region and a stationary peripheral stalk (subunits F6, b, d, and OSCP). Interacts with DNAJC30; interaction is direct.

Its subcellular location is the mitochondrion inner membrane. The catalysed reaction is H(+)(in) = H(+)(out). In terms of biological role, subunit a, of the mitochondrial membrane ATP synthase complex (F(1)F(0) ATP synthase or Complex V) that produces ATP from ADP in the presence of a proton gradient across the membrane which is generated by electron transport complexes of the respiratory chain. ATP synthase complex consist of a soluble F(1) head domain - the catalytic core - and a membrane F(1) domain - the membrane proton channel. These two domains are linked by a central stalk rotating inside the F(1) region and a stationary peripheral stalk. During catalysis, ATP synthesis in the catalytic domain of F(1) is coupled via a rotary mechanism of the central stalk subunits to proton translocation. With the subunit c (ATP5MC1), forms the proton-conducting channel in the F(0) domain, that contains two crucial half-channels (inlet and outlet) that facilitate proton movement from the mitochondrial intermembrane space (IMS) into the matrix. Protons are taken up via the inlet half-channel and released through the outlet half-channel, following a Grotthuss mechanism. The chain is ATP synthase F(0) complex subunit a from Ovis aries (Sheep).